The sequence spans 250 residues: Envelope glycoprotein L (250 aa).

The N-terminal stretch at 1–18 is a signal peptide; it reads MELLLFVMSLILLTFSKA. Positions 31-239 constitute a gL betaherpesvirus-type domain; the sequence is KLDDCIAAVI…ETYNSKLPFR (209 aa). C136 and C141 are disulfide-bonded.

This sequence belongs to the herpesviridae glycoprotein L (gL) family. Betaherpesvirinae gL subfamily. Interacts with glycoprotein H (gH); this interaction is necessary for the correct processing and cell surface expression of gH. Part of a gH-gL-gO complex.

It localises to the virion membrane. The protein localises to the host cell membrane. It is found in the host Golgi apparatus. Its subcellular location is the host trans-Golgi network. Its function is as follows. The heterodimer glycoprotein H-glycoprotein L is required for the fusion of viral and plasma membranes leading to virus entry into the host cell. Acts as a functional inhibitor of gH and maintains gH in an inhibited form. Upon binding to host integrins, gL dissociates from gH leading to activation of the viral fusion glycoproteins gB and gH. The protein is Envelope glycoprotein L of Human herpesvirus 6A (strain Uganda-1102) (HHV-6 variant A).